Consider the following 263-residue polypeptide: Type III pantothenate kinase (263 aa).

14-21 (DIGNTSVN) lines the ATP pocket. 115–118 (GADR) provides a ligand contact to substrate. The active-site Proton acceptor is the Asp-117. Asp-137 is a binding site for K(+). Thr-140 provides a ligand contact to ATP. Residue Thr-192 coordinates substrate.

This sequence belongs to the type III pantothenate kinase family. As to quaternary structure, homodimer. NH4(+) serves as cofactor. The cofactor is K(+).

Its subcellular location is the cytoplasm. The catalysed reaction is (R)-pantothenate + ATP = (R)-4'-phosphopantothenate + ADP + H(+). It functions in the pathway cofactor biosynthesis; coenzyme A biosynthesis; CoA from (R)-pantothenate: step 1/5. Functionally, catalyzes the phosphorylation of pantothenate (Pan), the first step in CoA biosynthesis. This chain is Type III pantothenate kinase, found in Dehalococcoides mccartyi (strain ATCC BAA-2100 / JCM 16839 / KCTC 5957 / BAV1).